A 515-amino-acid polypeptide reads, in one-letter code: Maturase K (515 aa).

It belongs to the intron maturase 2 family. MatK subfamily.

Its subcellular location is the plastid. The protein resides in the chloroplast. Its function is as follows. Usually encoded in the trnK tRNA gene intron. Probably assists in splicing its own and other chloroplast group II introns. This chain is Maturase K, found in Pinus coulteri (Coulter pine).